The chain runs to 663 residues: Probable acetolactate synthase 2, chloroplastic (663 aa).

The span at Met1–Val26 shows a compositional bias: low complexity. The segment at Met1 to Thr56 is disordered. Residues Met1–Arg79 constitute a chloroplast transit peptide. Basic and acidic residues-rich tracts occupy residues Arg28 to Val37 and Arg44 to Cys54. Thiamine diphosphate is bound at residue Glu132. Cys152 and Cys298 form a disulfide bridge. FAD-binding positions include Arg234, His340–Arg361, and Asp383–Asp402. The interval Gln478 to His558 is thiamine pyrophosphate binding. Mg(2+) is bound by residues Asp529 and Asn556.

This sequence belongs to the TPP enzyme family. Requires Mg(2+) as cofactor. The cofactor is thiamine diphosphate.

The protein localises to the plastid. The protein resides in the chloroplast. The catalysed reaction is 2 pyruvate + H(+) = (2S)-2-acetolactate + CO2. Its pathway is amino-acid biosynthesis; L-isoleucine biosynthesis; L-isoleucine from 2-oxobutanoate: step 1/4. The protein operates within amino-acid biosynthesis; L-valine biosynthesis; L-valine from pyruvate: step 1/4. In Oryza sativa subsp. japonica (Rice), this protein is Probable acetolactate synthase 2, chloroplastic (ALS2).